The chain runs to 149 residues: Large ribosomal subunit protein uL13 (149 aa).

Belongs to the universal ribosomal protein uL13 family. Part of the 50S ribosomal subunit.

In terms of biological role, this protein is one of the early assembly proteins of the 50S ribosomal subunit, although it is not seen to bind rRNA by itself. It is important during the early stages of 50S assembly. The chain is Large ribosomal subunit protein uL13 from Borrelia turicatae (strain 91E135).